A 59-amino-acid chain; its full sequence is Light-harvesting protein B-800-850 alpha chain E (59 aa).

At 1–11 (MNQGRIWTVVK) the chain is on the cytoplasmic side. A helical transmembrane segment spans residues 12–35 (PTVGLPLLLGSVTVIAILVHFAVL). An a bacteriochlorophyll-binding site is contributed by histidine 31. The Periplasmic portion of the chain corresponds to 36-59 (SNTTWFSKYWNGKAAAIESSVSIG).

Belongs to the antenna complex alpha subunit family. The core complex is formed by different alpha and beta chains, binding bacteriochlorophyll molecules, and arranged most probably in tetrameric structures disposed around the reaction center. The non-pigmented gamma chains may constitute additional components.

It localises to the cell inner membrane. Functionally, antenna complexes are light-harvesting systems, which transfer the excitation energy to the reaction centers. This chain is Light-harvesting protein B-800-850 alpha chain E (pucAE), found in Rhodopseudomonas palustris (strain ATCC BAA-98 / CGA009).